A 442-amino-acid chain; its full sequence is D-serine dehydratase 2 (442 aa).

Lysine 118 is subject to N6-(pyridoxal phosphate)lysine.

Belongs to the serine/threonine dehydratase family. DsdA subfamily. As to quaternary structure, monomer. Pyridoxal 5'-phosphate is required as a cofactor.

The catalysed reaction is D-serine = pyruvate + NH4(+). The polypeptide is D-serine dehydratase 2 (Escherichia coli O6:K15:H31 (strain 536 / UPEC)).